The sequence spans 89 residues: DNA/RNA-binding protein Alba 2 (89 aa).

This sequence belongs to the histone-like Alba family. As to quaternary structure, forms homodimers and homotetramers. Interacts with Alba 1.

Its subcellular location is the cytoplasm. The protein localises to the chromosome. Binds double-stranded DNA tightly but without sequence specificity. Involved in DNA compaction. The sequence is that of DNA/RNA-binding protein Alba 2 from Archaeoglobus fulgidus (strain ATCC 49558 / DSM 4304 / JCM 9628 / NBRC 100126 / VC-16).